We begin with the raw amino-acid sequence, 624 residues long: Elongation factor 4 (624 aa).

In terms of domain architecture, tr-type G spans A17–V203. Residues D29–T34 and N150–D153 each bind GTP.

It belongs to the TRAFAC class translation factor GTPase superfamily. Classic translation factor GTPase family. LepA subfamily.

It is found in the cell membrane. The enzyme catalyses GTP + H2O = GDP + phosphate + H(+). Functionally, required for accurate and efficient protein synthesis under certain stress conditions. May act as a fidelity factor of the translation reaction, by catalyzing a one-codon backward translocation of tRNAs on improperly translocated ribosomes. Back-translocation proceeds from a post-translocation (POST) complex to a pre-translocation (PRE) complex, thus giving elongation factor G a second chance to translocate the tRNAs correctly. Binds to ribosomes in a GTP-dependent manner. In Streptomyces griseus subsp. griseus (strain JCM 4626 / CBS 651.72 / NBRC 13350 / KCC S-0626 / ISP 5235), this protein is Elongation factor 4.